Here is a 210-residue protein sequence, read N- to C-terminus: Protein HEADING DATE REPRESSOR 1 (210 aa).

The interval 1 to 97 (MEEPASADPP…GKRSSAEMLL (97 aa)) is disordered. Positions 29–49 (QQELNKEAADEQLNNQAHEEA) form a coiled coil. Composition is skewed to basic and acidic residues over residues 45–54 (AHEEAMKIDD) and 62–79 (DDVH…RKAL). Residues 129-184 (RRIAIQEMNRKDREINGLNEQLEEDSRVLELLQKQLADERKKRTEIEKENSMLHEQ) adopt a coiled-coil conformation.

Interacts with OSK3 and OSK4. As to expression, mostly expressed in leaves, seedlings and floral organs, and, to a lower extent, in panicle, roots, nodes, internodes, leaf joint and sheath.

It localises to the nucleus. In terms of biological role, regulates flowering time via a photoperiod-dependent pathway. Suppressor of flowering that upregulates HD1 and down-regulates EHD1 in long days (LD), thus leading to the down-regulation of HD3A and RFT1. Triggers OSK4-mediated HD1 phosphorylation. The polypeptide is Protein HEADING DATE REPRESSOR 1 (Oryza sativa subsp. japonica (Rice)).